Consider the following 415-residue polypeptide: Serine hydroxymethyltransferase (415 aa).

(6S)-5,6,7,8-tetrahydrofolate is bound by residues leucine 117 and 121–123 (GHL). Lysine 226 bears the N6-(pyridoxal phosphate)lysine mark. Glutamate 241 lines the (6S)-5,6,7,8-tetrahydrofolate pocket.

It belongs to the SHMT family. Homodimer. It depends on pyridoxal 5'-phosphate as a cofactor.

Its subcellular location is the cytoplasm. The catalysed reaction is (6R)-5,10-methylene-5,6,7,8-tetrahydrofolate + glycine + H2O = (6S)-5,6,7,8-tetrahydrofolate + L-serine. Its pathway is one-carbon metabolism; tetrahydrofolate interconversion. The protein operates within amino-acid biosynthesis; glycine biosynthesis; glycine from L-serine: step 1/1. In terms of biological role, catalyzes the reversible interconversion of serine and glycine with tetrahydrofolate (THF) serving as the one-carbon carrier. This reaction serves as the major source of one-carbon groups required for the biosynthesis of purines, thymidylate, methionine, and other important biomolecules. Also exhibits THF-independent aldolase activity toward beta-hydroxyamino acids, producing glycine and aldehydes, via a retro-aldol mechanism. The protein is Serine hydroxymethyltransferase of Bacillus pumilus (strain SAFR-032).